The sequence spans 170 residues: Crossover junction endodeoxyribonuclease RuvC (170 aa).

Catalysis depends on residues Asp-11, Glu-71, and Asp-143. Mg(2+) contacts are provided by Asp-11, Glu-71, and Asp-143.

This sequence belongs to the RuvC family. As to quaternary structure, homodimer which binds Holliday junction (HJ) DNA. The HJ becomes 2-fold symmetrical on binding to RuvC with unstacked arms; it has a different conformation from HJ DNA in complex with RuvA. In the full resolvosome a probable DNA-RuvA(4)-RuvB(12)-RuvC(2) complex forms which resolves the HJ. Requires Mg(2+) as cofactor.

It localises to the cytoplasm. It carries out the reaction Endonucleolytic cleavage at a junction such as a reciprocal single-stranded crossover between two homologous DNA duplexes (Holliday junction).. In terms of biological role, the RuvA-RuvB-RuvC complex processes Holliday junction (HJ) DNA during genetic recombination and DNA repair. Endonuclease that resolves HJ intermediates. Cleaves cruciform DNA by making single-stranded nicks across the HJ at symmetrical positions within the homologous arms, yielding a 5'-phosphate and a 3'-hydroxyl group; requires a central core of homology in the junction. The consensus cleavage sequence is 5'-(A/T)TT(C/G)-3'. Cleavage occurs on the 3'-side of the TT dinucleotide at the point of strand exchange. HJ branch migration catalyzed by RuvA-RuvB allows RuvC to scan DNA until it finds its consensus sequence, where it cleaves and resolves the cruciform DNA. This chain is Crossover junction endodeoxyribonuclease RuvC, found in Rhizobium meliloti (strain 1021) (Ensifer meliloti).